A 651-amino-acid polypeptide reads, in one-letter code: ATP synthase F(1) complex catalytic subunit beta, mitochondrial (651 aa).

A mitochondrion-targeting transit peptide spans 1–30 (MFVARRLSKNITQISKTAVKTSVRAVPVRG). The ADP site is built by Gly-259, Val-260, Gly-261, Lys-262, Thr-263, and Val-264. Gly-259 provides a ligand contact to ATP. Positions 259, 260, 261, 262, and 263 each coordinate phosphate. Gly-261, Lys-262, Thr-263, and Val-264 together coordinate ATP. Thr-263 contacts Mg(2+). Residue Glu-288 coordinates Mg(2+). ATP is bound at residue Arg-289.

This sequence belongs to the ATPase alpha/beta chains family. Homotrimer. Component of the ATP synthase complex composed at least of ATP5F1A/subunit alpha, ATP5F1B/subunit beta, ATP5MC1/subunit c (homooctomer), MT-ATP6/subunit a, MT-ATP8/subunit 8, ATP5ME/subunit e, ATP5MF/subunit f, ATP5MG/subunit g, ATP5MK/subunit k, ATP5MJ/subunit j, ATP5F1C/subunit gamma, ATP5F1D/subunit delta, ATP5F1E/subunit epsilon, ATP5PF/subunit F6, ATP5PB/subunit b, ATP5PD/subunit d, ATP5PO/subunit OSCP. ATP synthase complex consists of a soluble F(1) head domain (subunits alpha(3) and beta(3)) - the catalytic core - and a membrane F(0) domain - the membrane proton channel (subunits c, a, 8, e, f, g, k and j). These two domains are linked by a central stalk (subunits gamma, delta, and epsilon) rotating inside the F1 region and a stationary peripheral stalk (subunits F6, b, d, and OSCP).

The protein localises to the mitochondrion inner membrane. It carries out the reaction ATP + H2O + 4 H(+)(in) = ADP + phosphate + 5 H(+)(out). Functionally, catalytic subunit beta, of the mitochondrial membrane ATP synthase complex (F(1)F(0) ATP synthase or Complex V) that produces ATP from ADP in the presence of a proton gradient across the membrane which is generated by electron transport complexes of the respiratory chain. ATP synthase complex consist of a soluble F(1) head domain - the catalytic core - and a membrane F(1) domain - the membrane proton channel. These two domains are linked by a central stalk rotating inside the F(1) region and a stationary peripheral stalk. During catalysis, ATP synthesis in the catalytic domain of F(1) is coupled via a rotary mechanism of the central stalk subunits to proton translocation. In vivo, can only synthesize ATP although its ATP hydrolase activity can be activated artificially in vitro. With the subunit alpha (ATP5F1A), forms the catalytic core in the F(1) domain. This is ATP synthase F(1) complex catalytic subunit beta, mitochondrial from Dictyostelium discoideum (Social amoeba).